The primary structure comprises 85 residues: Probable Thioredoxin (85 aa).

The Glutaredoxin domain maps to 2-85 (VVNIEVFTSP…LFEAINDEME (84 aa)). Cys-13 and Cys-16 are disulfide-bonded.

This sequence belongs to the glutaredoxin family.

The protein resides in the cytoplasm. Its function is as follows. Acts to maintain redox homeostasis; functions as a protein disulfide reductase. This is Probable Thioredoxin from Methanothermobacter thermautotrophicus (strain ATCC 29096 / DSM 1053 / JCM 10044 / NBRC 100330 / Delta H) (Methanobacterium thermoautotrophicum).